The sequence spans 742 residues: Glycine--tRNA ligase (742 aa).

The WHEP-TRS domain occupies K73–F129. E309 provides a ligand contact to glycine. ATP is bound by residues R341–E343 and R352–V353. E360 contacts glycine. E467–C468 is an ATP binding site. E586–S588 lines the glycine pocket. R593 is an ATP binding site.

The protein belongs to the class-II aminoacyl-tRNA synthetase family. Homodimer.

The protein resides in the cytoplasm. It is found in the cell projection. It localises to the axon. The protein localises to the secreted. Its subcellular location is the extracellular exosome. The catalysed reaction is tRNA(Gly) + glycine + ATP = glycyl-tRNA(Gly) + AMP + diphosphate. It carries out the reaction 2 ATP + H(+) = P(1),P(4)-bis(5'-adenosyl) tetraphosphate + diphosphate. In terms of biological role, catalyzes the ATP-dependent ligation of glycine to the 3'-end of its cognate tRNA, via the formation of an aminoacyl-adenylate intermediate (Gly-AMP). Also produces diadenosine tetraphosphate (Ap4A), a universal pleiotropic signaling molecule needed for cell regulation pathways, by direct condensation of 2 ATPs. Thereby, may play a special role in Ap4A homeostasis. The chain is Glycine--tRNA ligase from Caenorhabditis elegans.